The sequence spans 238 residues: Protein FEV (238 aa).

Positions 47 to 127 (IQLWQFLLEL…HGKRYAYRFD (81 aa)) form a DNA-binding region, ETS. Residues 129 to 238 (QGLAQACQPP…AASHLGGHYH (110 aa)) are may mediate active transcriptional repression.

The protein belongs to the ETS family. In terms of tissue distribution, in brain, exclusively expressed in the major serotonergic neurons of the dorsal and median raphe nuclei located in the midbrain and pons. Also detected in prostate and small intestine.

The protein localises to the nucleus. Functions as a transcriptional regulator. According to PubMed:12761502, it functions as a transcriptional repressor. Functions in the differentiation and the maintenance of the central serotonergic neurons. May play a role in cell growth. The polypeptide is Protein FEV (FEV) (Homo sapiens (Human)).